The sequence spans 513 residues: Autophagy-related protein 18 (513 aa).

A WD 1 repeat occupies S2–Q40. Residues N167 to K225 are disordered. Over residues K172 to H195 the composition is skewed to basic and acidic residues. Positions N205 to K225 are enriched in low complexity. Residues A248–Q288 form a WD 2 repeat. Positions F289–G292 are necessary for proper localization to vacuole membrane. The short motif at F289 to T293 is the L/FRRG motif element. A WD 3 repeat occupies T293 to T332. Residues K333–S398 are disordered. The span at N338–A369 shows a compositional bias: acidic residues.

It belongs to the WD repeat PROPPIN family. Component of the PI(3,5)P2 regulatory complex. Interacts with ATG2 and ATG9. The ATG2-ATG18 complex is essential for autophagosome formation.

It localises to the preautophagosomal structure membrane. It is found in the vacuole membrane. Its subcellular location is the endosome membrane. In terms of biological role, component of the PI(3,5)P2 regulatory complex that regulates both the synthesis and turnover of phosphatidylinositol 3,5-bisphosphate (PtdIns(3,5)P2). Plays an important role in osmotically-induced vacuole fragmentation. Required for cytoplasm to vacuole transport (Cvt) vesicle formation, pexophagy and starvation-induced autophagy. Involved in correct ATG9 trafficking to the pre-autophagosomal structure. With ATG2, protects ATG8 from ATG4-mediated cleavage. The sequence is that of Autophagy-related protein 18 from Kluyveromyces marxianus (strain DMKU3-1042 / BCC 29191 / NBRC 104275) (Yeast).